The following is a 635-amino-acid chain: Extracellular metalloproteinase 1 (635 aa).

Residues Met-1–Ala-19 form the signal peptide. A propeptide spanning residues His-20–His-246 is cleaved from the precursor. N-linked (GlcNAc...) asparagine glycosylation occurs at Asn-287. His-430 is a binding site for Zn(2+). Glu-431 is an active-site residue. His-434 contacts Zn(2+). Residues Asn-475, Asn-594, and Asn-623 are each glycosylated (N-linked (GlcNAc...) asparagine).

It belongs to the peptidase M36 family. Zn(2+) serves as cofactor.

The protein resides in the secreted. In terms of biological role, secreted metalloproteinase probably acting as a virulence factor. This chain is Extracellular metalloproteinase 1 (MEP1), found in Trichophyton rubrum (Athlete's foot fungus).